Reading from the N-terminus, the 98-residue chain is YcgL domain-containing protein CJA_2437 (98 aa).

Residues 3-87 enclose the YcgL domain; the sequence is IIAEIYRSPK…RDLVDAEAKR (85 aa).

The sequence is that of YcgL domain-containing protein CJA_2437 from Cellvibrio japonicus (strain Ueda107) (Pseudomonas fluorescens subsp. cellulosa).